The primary structure comprises 460 residues: tRNA modification GTPase MnmE (460 aa).

Residues R24, E81, and K121 each contribute to the (6S)-5-formyl-5,6,7,8-tetrahydrofolate site. One can recognise a TrmE-type G domain in the interval 218-384 (GLVVAIAGPP…MVEALAGFAA (167 aa)). Residues 228–233 (NVGKST), 247–253 (SPHAGTT), and 272–275 (DTAG) contribute to the GTP site. Positions 232 and 253 each coordinate Mg(2+). (6S)-5-formyl-5,6,7,8-tetrahydrofolate is bound at residue K460.

The protein belongs to the TRAFAC class TrmE-Era-EngA-EngB-Septin-like GTPase superfamily. TrmE GTPase family. Homodimer. Heterotetramer of two MnmE and two MnmG subunits. The cofactor is K(+).

The protein resides in the cytoplasm. Functionally, exhibits a very high intrinsic GTPase hydrolysis rate. Involved in the addition of a carboxymethylaminomethyl (cmnm) group at the wobble position (U34) of certain tRNAs, forming tRNA-cmnm(5)s(2)U34. This is tRNA modification GTPase MnmE from Rhodopseudomonas palustris (strain HaA2).